The sequence spans 104 residues: Class I hydrophobin 4 (104 aa).

A signal peptide spans 1-16 (MFASTVFVSLLAVAAA). Cystine bridges form between Cys-26–Cys-85, Cys-34–Cys-79, Cys-35–Cys-61, and Cys-86–Cys-99.

This sequence belongs to the fungal hydrophobin family. Self-assembles to form functional amyloid fibrils called rodlets. Self-assembly into fibrillar rodlets occurs spontaneously at hydrophobic:hydrophilic interfaces and the rodlets further associate laterally to form amphipathic monolayers.

It is found in the secreted. It localises to the cell wall. Aerial growth, conidiation, and dispersal of filamentous fungi in the environment rely upon a capability of their secreting small amphipathic proteins called hydrophobins (HPBs) with low sequence identity. Class I can self-assemble into an outermost layer of rodlet bundles on aerial cell surfaces, conferring cellular hydrophobicity that supports fungal growth, development and dispersal; whereas Class II form highly ordered films at water-air interfaces through intermolecular interactions but contribute nothing to the rodlet structure. HYD4 is a class I hydrophobin that negatively regulates aerial mycelial growth, conidiation, carotenoid and adenosine synthesis, resistance to oxidant stress, and fruiting body development. Seems not to be involved in the mycelial growth rate, the hydrophobicity of the mycelia and conidia, nor the conidial virulence on silkworm pupae. This chain is Class I hydrophobin 4, found in Cordyceps militaris (Caterpillar fungus).